Here is a 558-residue protein sequence, read N- to C-terminus: Serine/threonine-protein phosphatase 2B catalytic subunit (558 aa).

Residues aspartate 128, histidine 130, and aspartate 156 each contribute to the Fe cation site. Zn(2+) is bound by residues aspartate 156 and asparagine 188. Catalysis depends on histidine 189, which acts as the Proton donor. Residues histidine 237 and histidine 319 each contribute to the Zn(2+) site. 2 disordered regions span residues 415–439 and 534–558; these read LRED…NQDP and ALER…LSTS. Positions 420–435 are enriched in low complexity; that stretch reads ATTSPGSASPALPSAA. Residues 534–548 show a composition bias toward basic and acidic residues; it reads ALERATREADNDKKL. Positions 549 to 558 are enriched in polar residues; that stretch reads QTLSRRLSTS.

The protein belongs to the PPP phosphatase family. PP-2B subfamily. In terms of assembly, composed of two components (A and B), the A component is the catalytic subunit and the B component confers calcium sensitivity. Fe(3+) is required as a cofactor. Zn(2+) serves as cofactor.

It carries out the reaction O-phospho-L-seryl-[protein] + H2O = L-seryl-[protein] + phosphate. The catalysed reaction is O-phospho-L-threonyl-[protein] + H2O = L-threonyl-[protein] + phosphate. In terms of biological role, calcium-dependent, calmodulin-stimulated protein phosphatase. This subunit may have a role in the calmodulin activation of calcineurin. The chain is Serine/threonine-protein phosphatase 2B catalytic subunit (cna-1) from Neurospora crassa (strain ATCC 24698 / 74-OR23-1A / CBS 708.71 / DSM 1257 / FGSC 987).